A 772-amino-acid polypeptide reads, in one-letter code: UDP-N-acetylmuramoyl-L-alanyl-D-glutamate--2,6-diaminopimelate ligase MurE homolog, chloroplastic (772 aa).

Residues 1 to 40 (MAFTFLSPHPVFLSLTGTTSSFSYKPVLLPFSRNSRTLTV) constitute a chloroplast transit peptide. 2 disordered regions span residues 42-87 (AGPA…KLEE) and 141-168 (LLKP…DVTD). Acidic residues-rich tracts occupy residues 54–63 (ADDDPPEAPE) and 158–168 (EGNEEEGDVTD). Ser194 is subject to Phosphoserine.

The protein belongs to the MurCDEF family. MurE subfamily. In terms of assembly, component of the plastid-encoded plastid RNA polymerase (PEP) complex. Expressed in leaves and flowers.

The protein localises to the plastid. The protein resides in the chloroplast. In terms of biological role, involved in chloroplast biogenesis. Required for thylakoid membrane development. Seems to be required for plastid-encoded plastid RNA polymerase (PEP)-dependent gene expression. The chain is UDP-N-acetylmuramoyl-L-alanyl-D-glutamate--2,6-diaminopimelate ligase MurE homolog, chloroplastic from Arabidopsis thaliana (Mouse-ear cress).